Here is a 384-residue protein sequence, read N- to C-terminus: 8-amino-7-oxononanoate synthase (384 aa).

Position 21 (arginine 21) interacts with substrate. Pyridoxal 5'-phosphate is bound at residue 108–109 (GF). Histidine 133 is a substrate binding site. 3 residues coordinate pyridoxal 5'-phosphate: serine 179, histidine 207, and threonine 233. N6-(pyridoxal phosphate)lysine is present on lysine 236. A substrate-binding site is contributed by threonine 352.

This sequence belongs to the class-II pyridoxal-phosphate-dependent aminotransferase family. BioF subfamily. As to quaternary structure, homodimer. Pyridoxal 5'-phosphate is required as a cofactor.

The enzyme catalyses 6-carboxyhexanoyl-[ACP] + L-alanine + H(+) = (8S)-8-amino-7-oxononanoate + holo-[ACP] + CO2. It participates in cofactor biosynthesis; biotin biosynthesis. Its function is as follows. Catalyzes the decarboxylative condensation of pimeloyl-[acyl-carrier protein] and L-alanine to produce 8-amino-7-oxononanoate (AON), [acyl-carrier protein], and carbon dioxide. The protein is 8-amino-7-oxononanoate synthase of Shigella sonnei (strain Ss046).